A 135-amino-acid chain; its full sequence is Ribonuclease VapC9 (135 aa).

The 104-residue stretch at 15–118 folds into the PINc domain; that stretch reads VVDTNVLMYV…LKRKAKQRGI (104 aa). Mg(2+) contacts are provided by D17 and D88.

Belongs to the PINc/VapC protein family. Dimer. It depends on Mg(2+) as a cofactor.

In terms of biological role, toxic component of a type II toxin-antitoxin (TA) system. An RNase. The polypeptide is Ribonuclease VapC9 (Archaeoglobus fulgidus (strain ATCC 49558 / DSM 4304 / JCM 9628 / NBRC 100126 / VC-16)).